We begin with the raw amino-acid sequence, 541 residues long: Putative nucleobase-ascorbate transporter 10 (541 aa).

12 consecutive transmembrane segments (helical) span residues 52 to 72 (LLSLGITVLIPSVLVPLMGGG), 79 to 99 (VIQTLLFVSGLTTLFQSFFGT), 101 to 121 (LPVIAVASYAYIIPITSIIYS), 141 to 161 (IQGALIITGCFQVLICILGVW), 173 to 193 (IAPLATFTGLGLYHIGFPLLA), 196 to 216 (VEVGLPGLILLIFVTQYLPRF), 235 to 255 (GMILCIPLVWLFAQLLTSSGV), 299 to 319 (SFAMMAASFVTLFESTGLFYA), 376 to 396 (RVIQISAAFMIFFSIFGKFGA), 397 to 417 (FFASIPLPIMASLYCIVLCFV), 433 to 453 (FNIKFILGFSFFMAISIPQYF), and 476 to 496 (VIFMSHTTVAAIIAIVLDCTL).

It belongs to the nucleobase:cation symporter-2 (NCS2) (TC 2.A.40) family.

It localises to the membrane. The chain is Putative nucleobase-ascorbate transporter 10 (NAT10) from Arabidopsis thaliana (Mouse-ear cress).